The primary structure comprises 298 residues: Ribosomal RNA small subunit methyltransferase A (298 aa).

The S-adenosyl-L-methionine site is built by Asn35, Leu37, Gly62, Glu83, Asp108, and Asn133.

Belongs to the class I-like SAM-binding methyltransferase superfamily. rRNA adenine N(6)-methyltransferase family. RsmA subfamily.

The protein resides in the cytoplasm. The enzyme catalyses adenosine(1518)/adenosine(1519) in 16S rRNA + 4 S-adenosyl-L-methionine = N(6)-dimethyladenosine(1518)/N(6)-dimethyladenosine(1519) in 16S rRNA + 4 S-adenosyl-L-homocysteine + 4 H(+). Its function is as follows. Specifically dimethylates two adjacent adenosines (A1518 and A1519) in the loop of a conserved hairpin near the 3'-end of 16S rRNA in the 30S particle. May play a critical role in biogenesis of 30S subunits. The sequence is that of Ribosomal RNA small subunit methyltransferase A from Streptococcus pyogenes serotype M12 (strain MGAS9429).